The following is a 234-amino-acid chain: Small ribosomal subunit protein uS2c (234 aa).

Belongs to the universal ribosomal protein uS2 family.

Its subcellular location is the plastid. The protein resides in the chloroplast. The chain is Small ribosomal subunit protein uS2c (rps2) from Pinus thunbergii (Japanese black pine).